The sequence spans 161 residues: Nucleotide-binding protein Nmul_A1044 (161 aa).

It belongs to the YajQ family.

Its function is as follows. Nucleotide-binding protein. The protein is Nucleotide-binding protein Nmul_A1044 of Nitrosospira multiformis (strain ATCC 25196 / NCIMB 11849 / C 71).